We begin with the raw amino-acid sequence, 318 residues long: NADH-ubiquinone oxidoreductase chain 1 (318 aa).

Helical transmembrane passes span 2 to 22 (FLINTLLLILPVLLAMAFLTL), 69 to 89 (LLFIIAPTLALTLALSMWLPI), 102 to 122 (ILFILATSSLAVYSILWSGWA), 146 to 166 (LAIILLCILLMNGSFTLSSLI), 171 to 191 (YMWILLPAWPLAMMWFISTLA), 222 to 242 (LFFLAEYTNIILMNALTAILF), 253 to 273 (EMFTVNFATKTLLLTMTFLWI), and 294 to 314 (LPLTLALCMWHISMPIMLSSI).

This sequence belongs to the complex I subunit 1 family. As to quaternary structure, core subunit of respiratory chain NADH dehydrogenase (Complex I) which is composed of 45 different subunits.

Its subcellular location is the mitochondrion inner membrane. The catalysed reaction is a ubiquinone + NADH + 5 H(+)(in) = a ubiquinol + NAD(+) + 4 H(+)(out). In terms of biological role, core subunit of the mitochondrial membrane respiratory chain NADH dehydrogenase (Complex I) which catalyzes electron transfer from NADH through the respiratory chain, using ubiquinone as an electron acceptor. Essential for the catalytic activity and assembly of complex I. This is NADH-ubiquinone oxidoreductase chain 1 (MT-ND1) from Oryctolagus cuniculus (Rabbit).